A 95-amino-acid polypeptide reads, in one-letter code: Cell division topological specificity factor (95 aa).

Belongs to the MinE family.

Its function is as follows. Prevents the cell division inhibition by proteins MinC and MinD at internal division sites while permitting inhibition at polar sites. This ensures cell division at the proper site by restricting the formation of a division septum at the midpoint of the long axis of the cell. The sequence is that of Cell division topological specificity factor from Methylorubrum extorquens (strain CM4 / NCIMB 13688) (Methylobacterium extorquens).